We begin with the raw amino-acid sequence, 384 residues long: N-acetyldiaminopimelate deacetylase (384 aa).

D74 is a catalytic residue. Catalysis depends on E133, which acts as the Proton acceptor.

It belongs to the peptidase M20A family. N-acetyldiaminopimelate deacetylase subfamily.

The catalysed reaction is N-acetyl-(2S,6S)-2,6-diaminopimelate + H2O = (2S,6S)-2,6-diaminopimelate + acetate. It functions in the pathway amino-acid biosynthesis; L-lysine biosynthesis via DAP pathway; LL-2,6-diaminopimelate from (S)-tetrahydrodipicolinate (acetylase route): step 3/3. In terms of biological role, catalyzes the conversion of N-acetyl-diaminopimelate to diaminopimelate and acetate. The protein is N-acetyldiaminopimelate deacetylase of Lactiplantibacillus plantarum (strain ATCC BAA-793 / NCIMB 8826 / WCFS1) (Lactobacillus plantarum).